Consider the following 230-residue polypeptide: Phosphoribosylaminoimidazole-succinocarboxamide synthase (230 aa).

The protein belongs to the SAICAR synthetase family.

It catalyses the reaction 5-amino-1-(5-phospho-D-ribosyl)imidazole-4-carboxylate + L-aspartate + ATP = (2S)-2-[5-amino-1-(5-phospho-beta-D-ribosyl)imidazole-4-carboxamido]succinate + ADP + phosphate + 2 H(+). The protein operates within purine metabolism; IMP biosynthesis via de novo pathway; 5-amino-1-(5-phospho-D-ribosyl)imidazole-4-carboxamide from 5-amino-1-(5-phospho-D-ribosyl)imidazole-4-carboxylate: step 1/2. This Thermotoga sp. (strain RQ2) protein is Phosphoribosylaminoimidazole-succinocarboxamide synthase.